The chain runs to 429 residues: CinA-like protein (429 aa).

Belongs to the CinA family.

The sequence is that of CinA-like protein from Chlorobium limicola (strain DSM 245 / NBRC 103803 / 6330).